The sequence spans 90 residues: Probable Fe(2+)-trafficking protein (90 aa).

Belongs to the Fe(2+)-trafficking protein family.

Could be a mediator in iron transactions between iron acquisition and iron-requiring processes, such as synthesis and/or repair of Fe-S clusters in biosynthetic enzymes. The sequence is that of Probable Fe(2+)-trafficking protein from Verminephrobacter eiseniae (strain EF01-2).